The primary structure comprises 549 residues: Oxygen-dependent choline dehydrogenase (549 aa).

4–33 is an FAD binding site; sequence DFVIIGSGSAGSAMAYRLSEDGRYSVIVIE. His-465 serves as the catalytic Proton acceptor.

The protein belongs to the GMC oxidoreductase family. It depends on FAD as a cofactor.

The enzyme catalyses choline + A = betaine aldehyde + AH2. The catalysed reaction is betaine aldehyde + NAD(+) + H2O = glycine betaine + NADH + 2 H(+). The protein operates within amine and polyamine biosynthesis; betaine biosynthesis via choline pathway; betaine aldehyde from choline (cytochrome c reductase route): step 1/1. Involved in the biosynthesis of the osmoprotectant glycine betaine. Catalyzes the oxidation of choline to betaine aldehyde and betaine aldehyde to glycine betaine at the same rate. In Brucella anthropi (strain ATCC 49188 / DSM 6882 / CCUG 24695 / JCM 21032 / LMG 3331 / NBRC 15819 / NCTC 12168 / Alc 37) (Ochrobactrum anthropi), this protein is Oxygen-dependent choline dehydrogenase.